The chain runs to 281 residues: Probable endonuclease 4 (281 aa).

His78, His118, Glu149, Asp181, His184, His216, Asp229, His231, and Glu260 together coordinate Zn(2+).

It belongs to the AP endonuclease 2 family. Requires Zn(2+) as cofactor.

The enzyme catalyses Endonucleolytic cleavage to 5'-phosphooligonucleotide end-products.. Endonuclease IV plays a role in DNA repair. It cleaves phosphodiester bonds at apurinic or apyrimidinic (AP) sites, generating a 3'-hydroxyl group and a 5'-terminal sugar phosphate. The polypeptide is Probable endonuclease 4 (Thermoplasma acidophilum (strain ATCC 25905 / DSM 1728 / JCM 9062 / NBRC 15155 / AMRC-C165)).